The following is a 908-amino-acid chain: Protein translocase subunit SecA (908 aa).

ATP contacts are provided by residues Gln87, 105-109 (GEGKT), and Asp512. Positions 865–908 (GGDDGSDEMMAHTPMIRDGDKVGRNDPCPCGSGRKYKQCHGKLS) are disordered. Residues 879 to 888 (MIRDGDKVGR) show a composition bias toward basic and acidic residues. Zn(2+) is bound by residues Cys892, Cys894, Cys903, and His904. Residues 898–908 (RKYKQCHGKLS) are compositionally biased toward basic residues.

This sequence belongs to the SecA family. In terms of assembly, monomer and homodimer. Part of the essential Sec protein translocation apparatus which comprises SecA, SecYEG and auxiliary proteins SecDF-YajC and YidC. Zn(2+) serves as cofactor.

It localises to the cell inner membrane. It is found in the cytoplasm. The enzyme catalyses ATP + H2O + cellular proteinSide 1 = ADP + phosphate + cellular proteinSide 2.. Part of the Sec protein translocase complex. Interacts with the SecYEG preprotein conducting channel. Has a central role in coupling the hydrolysis of ATP to the transfer of proteins into and across the cell membrane, serving both as a receptor for the preprotein-SecB complex and as an ATP-driven molecular motor driving the stepwise translocation of polypeptide chains across the membrane. This Shewanella sp. (strain MR-7) protein is Protein translocase subunit SecA.